The sequence spans 97 residues: MEQAPENQGPAKEPFNEWALELLEELKAEAVRHFPRPWLHALGQYIYETYGDTWVGVMAIIRILQQLLFTHYRIGCQHSRIGINPRGRGRRNGSSRS.

Residues 1 to 42 (MEQAPENQGPAKEPFNEWALELLEELKAEAVRHFPRPWLHAL) form a homooligomerization region. Phosphoserine; by host occurs at positions 79, 95, and 97.

It belongs to the HIV-1 VPR protein family. As to quaternary structure, homooligomer, may form homodimer. Interacts with p6-gag region of the Pr55 Gag precursor protein through a (Leu-X-X)4 motif near the C-terminus of the P6gag protein. Interacts with host UNG. May interact with host RAD23A/HHR23A. Interacts with host VPRBP/DCAF1, leading to hijack the CUL4A-RBX1-DDB1-DCAF1/VPRBP complex, mediating ubiquitination of host proteins such as TERT and ZGPAT and arrest of the cell cycle in G2 phase. Phosphorylated on several residues by host. These phosphorylations regulate VPR activity for the nuclear import of the HIV-1 pre-integration complex.

The protein resides in the virion. Its subcellular location is the host nucleus. It localises to the host extracellular space. In terms of biological role, during virus replication, may deplete host UNG protein, and incude G2-M cell cycle arrest. Acts by targeting specific host proteins for degradation by the 26S proteasome, through association with the cellular CUL4A-DDB1 E3 ligase complex by direct interaction with host VPRPB/DCAF-1. Cell cycle arrest reportedly occurs within hours of infection and is not blocked by antiviral agents, suggesting that it is initiated by the VPR carried into the virion. Additionally, VPR induces apoptosis in a cell cycle dependent manner suggesting that these two effects are mechanistically linked. Detected in the serum and cerebrospinal fluid of AIDS patient, VPR may also induce cell death to bystander cells. During virus entry, plays a role in the transport of the viral pre-integration (PIC) complex to the host nucleus. This function is crucial for viral infection of non-dividing macrophages. May act directly at the nuclear pore complex, by binding nucleoporins phenylalanine-glycine (FG)-repeat regions. This is Protein Vpr from Human immunodeficiency virus type 1 group O (isolate ANT70) (HIV-1).